The primary structure comprises 474 residues: MSILHSFNKDTICAVATAPGVGGIAVIRVSGADAFRLVSPLFLYRGKAIDLSGAKPRTALYGEIMEADELIDEVILTCFHGPHSFTAEHTVEIACHGSIYIRRRILEALINQGCRLAQPGEFTRRAYLNGRMDLSSAEAVADIIASESKAQHQMAMKQLRGGYSEELNALREELLRLTGLMELELDFPEEDVEFADRTELLALCDQIELKLKKLIDSYRLGNAVKRGIPVAIVGTTNVGKSTLLNTLLGEERAIVSDIHGTTRDTIEDTMHIGGYLFRFVDTAGLRETEDTIESLGIERSRSKIKEADIILAVVDGTRISEANQLDYIKSIWDEREERTLILLVNKSESLAEADRIGLSETLQTKLSTPTKPIFISAREGRGIDELKGELTQIMETSGANEADLIVSNARHHQLLREAFDALRRMRLGFDMGLSTDLLTLDLRHAITSIGEITGREITSDDTLHYIFAHFCIGK.

Residues R28, E92, and R131 each coordinate (6S)-5-formyl-5,6,7,8-tetrahydrofolate. The region spanning 227–395 (GIPVAIVGTT…LKGELTQIME (169 aa)) is the TrmE-type G domain. Residue N237 coordinates K(+). GTP-binding positions include 237-242 (NVGKST), 256-262 (SDIHGTT), 281-284 (DTAG), and 376-378 (SAR). S241 is a binding site for Mg(2+). K(+)-binding residues include S256, I258, and T261. T262 contacts Mg(2+). K474 serves as a coordination point for (6S)-5-formyl-5,6,7,8-tetrahydrofolate.

The protein belongs to the TRAFAC class TrmE-Era-EngA-EngB-Septin-like GTPase superfamily. TrmE GTPase family. In terms of assembly, homodimer. Heterotetramer of two MnmE and two MnmG subunits. Requires K(+) as cofactor.

Its subcellular location is the cytoplasm. Exhibits a very high intrinsic GTPase hydrolysis rate. Involved in the addition of a carboxymethylaminomethyl (cmnm) group at the wobble position (U34) of certain tRNAs, forming tRNA-cmnm(5)s(2)U34. The sequence is that of tRNA modification GTPase MnmE from Porphyromonas gingivalis (strain ATCC BAA-308 / W83).